The sequence spans 503 residues: Carboxyl-terminal PDZ ligand of neuronal nitric oxide synthase protein (503 aa).

A PID domain is found at 26 to 191; the sequence is FQHGISFEAK…ESERNSDGSG (166 aa). The segment at 170-212 is disordered; the sequence is HTQQNADGQEDGESERNSDGSGDPGRQLTGAERVSTATAEETD. 4 positions are modified to phosphoserine: Ser-183, Ser-187, Ser-190, and Ser-262. The interval 266 to 285 is disordered; the sequence is LLPSSSSSKPPGLGTGTPLS. The stretch at 319 to 360 forms a coiled coil; sequence AAEAAARLEAQARVHQLLLQNKDMLQHISLLVKQVQELELKL. Residues Ser-368, Ser-371, Ser-398, and Ser-414 each carry the phosphoserine modification. Residues 491–503 are interaction with NOS1; the sequence is QELGDSLDDEIAV. The PDZ-binding motif lies at 501-503; that stretch reads IAV.

Interacts with the PDZ domain of NOS1 or the second PDZ domain of DLG4 through its C-terminus. Interacts with RASD1 and SYN1, SYN2 and SYN3 via its PID domain. Forms a ternary complex with NOS1 and RASD1. Forms a ternary complex with NOS1 and SYN1. As to expression, mainly expressed in brain. Highly expressed in accessory olfactory bulb, caudate-putamen, cerebellum, cerebral cortex, dentate gyrus of the hippocampus, islands of Calleja, olfactory bulb and supraoptic nucleus. Expressed in kidney glomeruli podocytes (at protein level).

Its subcellular location is the cell projection. The protein resides in the filopodium. It is found in the podosome. Adapter protein involved in neuronal nitric-oxide (NO) synthesis regulation via its association with nNOS/NOS1. The complex formed with NOS1 and synapsins is necessary for specific NO and synapsin functions at a presynaptic level. Mediates an indirect interaction between NOS1 and RASD1 leading to enhance the ability of NOS1 to activate RASD1. Competes with DLG4 for interaction with NOS1, possibly affecting NOS1 activity by regulating the interaction between NOS1 and DLG4. In kidney podocytes, plays a role in podosomes and filopodia formation through CDC42 activation. This chain is Carboxyl-terminal PDZ ligand of neuronal nitric oxide synthase protein, found in Rattus norvegicus (Rat).